Here is a 547-residue protein sequence, read N- to C-terminus: Chaperonin GroEL (547 aa).

Residues 30–33 (TLGP), Lys51, 87–91 (DGTTT), Gly415, and Asp496 contribute to the ATP site. A disordered region spans residues 528–547 (KEGAAPAGGMPDMGGMGGMM). Residues 538-547 (PDMGGMGGMM) are compositionally biased toward gly residues.

This sequence belongs to the chaperonin (HSP60) family. In terms of assembly, forms a cylinder of 14 subunits composed of two heptameric rings stacked back-to-back. Interacts with the co-chaperonin GroES.

It is found in the cytoplasm. It catalyses the reaction ATP + H2O + a folded polypeptide = ADP + phosphate + an unfolded polypeptide.. Functionally, together with its co-chaperonin GroES, plays an essential role in assisting protein folding. The GroEL-GroES system forms a nano-cage that allows encapsulation of the non-native substrate proteins and provides a physical environment optimized to promote and accelerate protein folding. This Ruegeria sp. (strain TM1040) (Silicibacter sp.) protein is Chaperonin GroEL.